Reading from the N-terminus, the 3625-residue chain is Cubilin (3625 aa).

The N-terminal stretch at methionine 1–alanine 20 is a signal peptide. Positions glutamate 21–arginine 36 are cleaved as a propeptide — removed in mature form. The interaction with AMN stretch occupies residues proline 43–glycine 50. The N-linked (GlcNAc...) asparagine glycan is linked to asparagine 106. Residues aspartate 133–serine 169 form the EGF-like 1 domain. 6 disulfides stabilise this stretch: cysteine 137–cysteine 148, cysteine 142–cysteine 157, cysteine 159–cysteine 168, cysteine 175–cysteine 191, cysteine 185–cysteine 200, and cysteine 202–cysteine 211. One can recognise an EGF-like 2; calcium-binding domain in the interval aspartate 171–alanine 212. Asparagine 257 carries an N-linked (GlcNAc...) asparagine glycan. The EGF-like 3; calcium-binding domain occupies aspartate 264–glutamate 305. Intrachain disulfides connect cysteine 268–cysteine 281, cysteine 275–cysteine 290, cysteine 293–cysteine 304, cysteine 310–cysteine 325, cysteine 317–cysteine 334, cysteine 337–cysteine 348, cysteine 354–cysteine 367, cysteine 361–cysteine 377, cysteine 379–cysteine 393, cysteine 400–cysteine 410, cysteine 405–cysteine 419, cysteine 421–cysteine 430, cysteine 437–cysteine 448, cysteine 442–cysteine 457, cysteine 459–cysteine 468, cysteine 475–cysteine 501, cysteine 528–cysteine 550, cysteine 591–cysteine 617, cysteine 644–cysteine 666, and cysteine 709–cysteine 734. An EGF-like 4; calcium-binding domain is found at aspartate 306–threonine 349. EGF-like domains are found at residues leucine 350–valine 394 and leucine 396–threonine 431. Asparagine 429 carries an N-linked (GlcNAc...) asparagine glycan. The EGF-like 7; calcium-binding domain maps to asparagine 433 to histidine 469. 27 CUB domains span residues cysteine 475–arginine 587, cysteine 591–threonine 703, cysteine 709–alanine 816, cysteine 817–glutamate 928, cysteine 932–threonine 1042, serine 1045–serine 1163, cysteine 1167–threonine 1279, cysteine 1280–histidine 1391, cysteine 1393–valine 1508, cysteine 1512–alanine 1621, cysteine 1622–serine 1736, cysteine 1740–isoleucine 1852, glycine 1854–methionine 1965, cysteine 1980–serine 2093, cysteine 2094–lysine 2215, cysteine 2219–alanine 2336, cysteine 2338–serine 2450, cysteine 2454–serine 2567, cysteine 2572–threonine 2689, cysteine 2691–glutamate 2803, cysteine 2807–arginine 2921, cysteine 2922–threonine 3037, cysteine 3039–threonine 3152, cysteine 3159–leucine 3276, cysteine 3280–cysteine 3397, cysteine 3397–serine 3509, and cysteine 3513–serine 3625. N-linked (GlcNAc...) asparagine glycans are attached at residues asparagine 712 and asparagine 749. Cysteines 761 and 779 form a disulfide. Residue asparagine 781 is glycosylated (N-linked (GlcNAc...) asparagine). Cysteine 817 and cysteine 842 are joined by a disulfide. Asparagine 857 carries an N-linked (GlcNAc...) asparagine glycan. 2 disulfides stabilise this stretch: cysteine 869-cysteine 891 and cysteine 932-cysteine 958. A glycan (N-linked (GlcNAc...) asparagine) is linked at asparagine 957. Ca(2+) is bound at residue glutamate 980. The N-linked (GlcNAc...) asparagine glycan is linked to asparagine 984. The cysteines at positions 985 and 1005 are disulfide-linked. Aspartate 988, aspartate 1027, aspartate 1029, and leucine 1030 together coordinate Ca(2+). Asparagine 1048 is a glycosylation site (N-linked (GlcNAc...) asparagine). Residues glutamate 1097, aspartate 1107, and aspartate 1148 each contribute to the Ca(2+) site. Residues cysteine 1104 and cysteine 1126 are joined by a disulfide bond. Residues cysteine 1167 and cysteine 1193 are joined by a disulfide bond. Residue asparagine 1170 is glycosylated (N-linked (GlcNAc...) asparagine). Glutamate 1215 serves as a coordination point for Ca(2+). N-linked (GlcNAc...) asparagine glycosylation is present at asparagine 1219. Residues cysteine 1220 and cysteine 1242 are joined by a disulfide bond. Residues aspartate 1223, aspartate 1264, glycine 1266, and glutamine 1267 each coordinate Ca(2+). Cysteines 1280 and 1308 form a disulfide. 3 N-linked (GlcNAc...) asparagine glycosylation sites follow: asparagine 1287, asparagine 1309, and asparagine 1321. Glutamate 1330 serves as a coordination point for Ca(2+). A glycan (N-linked (GlcNAc...) asparagine) is linked at asparagine 1334. The cysteines at positions 1335 and 1353 are disulfide-linked. Ca(2+) contacts are provided by aspartate 1338, aspartate 1375, and valine 1377. 2 cysteine pairs are disulfide-bonded: cysteine 1393–cysteine 1419 and cysteine 1446–cysteine 1468. N-linked (GlcNAc...) asparagine glycosylation occurs at asparagine 1502. The cysteines at positions 1512 and 1538 are disulfide-linked. Residue asparagine 1553 is glycosylated (N-linked (GlcNAc...) asparagine). 5 disulfide bridges follow: cysteine 1565–cysteine 1583, cysteine 1622–cysteine 1649, cysteine 1677–cysteine 1699, cysteine 1740–cysteine 1766, and cysteine 1793–cysteine 1814. Residue asparagine 1648 is glycosylated (N-linked (GlcNAc...) asparagine). N-linked (GlcNAc...) asparagine glycans are attached at residues asparagine 1804, asparagine 1821, and asparagine 1887. Intrachain disulfides connect cysteine 1907–cysteine 1929, cysteine 1980–cysteine 2008, and cysteine 2034–cysteine 2056. N-linked (GlcNAc...) asparagine glycosylation is found at asparagine 2087 and asparagine 2119. 2 disulfides stabilise this stretch: cysteine 2094–cysteine 2120 and cysteine 2219–cysteine 2249. A glycan (N-linked (GlcNAc...) asparagine) is linked at asparagine 2276. Cystine bridges form between cysteine 2277/cysteine 2299 and cysteine 2338/cysteine 2365. 2 N-linked (GlcNAc...) asparagine glycosylation sites follow: asparagine 2388 and asparagine 2402. 3 disulfides stabilise this stretch: cysteine 2392-cysteine 2413, cysteine 2454-cysteine 2480, and cysteine 2507-cysteine 2529. N-linked (GlcNAc...) asparagine glycosylation is found at asparagine 2533, asparagine 2583, asparagine 2594, and asparagine 2612. A disulfide bridge connects residues cysteine 2572 and cysteine 2601. 5 disulfide bridges follow: cysteine 2630-cysteine 2651, cysteine 2691-cysteine 2717, cysteine 2744-cysteine 2766, cysteine 2807-cysteine 2833, and cysteine 2862-cysteine 2885. 4 N-linked (GlcNAc...) asparagine glycosylation sites follow: asparagine 2887, asparagine 2925, asparagine 2928, and asparagine 2947. Intrachain disulfides connect cysteine 2922-cysteine 2948 and cysteine 2979-cysteine 3001. Threonine 3010 carries the post-translational modification Phosphothreonine. Disulfide bonds link cysteine 3039–cysteine 3066 and cysteine 3093–cysteine 3115. N-linked (GlcNAc...) asparagine glycans are attached at residues asparagine 3044, asparagine 3105, and asparagine 3127. Disulfide bonds link cysteine 3159–cysteine 3187 and cysteine 3217–cysteine 3239. N-linked (GlcNAc...) asparagine glycosylation is found at asparagine 3270 and asparagine 3285. Intrachain disulfides connect cysteine 3280/cysteine 3308 and cysteine 3334/cysteine 3356. N-linked (GlcNAc...) asparagine glycosylation is present at asparagine 3359. Cysteines 3397 and 3423 form a disulfide. 3 N-linked (GlcNAc...) asparagine glycosylation sites follow: asparagine 3432, asparagine 3459, and asparagine 3535. 3 disulfides stabilise this stretch: cysteine 3450–cysteine 3472, cysteine 3513–cysteine 3539, and cysteine 3566–cysteine 3588.

As to quaternary structure, interacts with AMN. Component of the cubam complex composed of one CUBN trimer and one AMN chain. The cubam complex can dimerize. Interacts with LRP2 in a dual-receptor complex in a calcium-dependent manner. Found in a complex with PID1/PCLI1, LRP1 and CUBNI. Interacts with LRP1 and PID1/PCLI1. In terms of processing, the precursor is cleaved by a trans-Golgi proteinase furin, removing a propeptide. Post-translationally, N-glycosylated. Detected in kidney cortex (at protein level).

The protein localises to the apical cell membrane. It is found in the cell membrane. Its subcellular location is the membrane. The protein resides in the coated pit. It localises to the endosome. The protein localises to the lysosome membrane. In terms of biological role, endocytic receptor which plays a role in lipoprotein, vitamin and iron metabolism by facilitating their uptake. Acts together with LRP2 to mediate endocytosis of high-density lipoproteins, GC, hemoglobin, ALB, TF and SCGB1A1. Acts together with AMN to mediate endocytosis of the CBLIF-cobalamin complex. Binds to ALB, MB, Kappa and lambda-light chains, TF, hemoglobin, GC, SCGB1A1, APOA1, high density lipoprotein, and the CBLIF-cobalamin complex. Ligand binding requires calcium. Serves as important transporter in several absorptive epithelia, including intestine, renal proximal tubules and embryonic yolk sac. May play an important role in the development of the peri-implantation embryo through internalization of APOA1 and cholesterol. Binds to LGALS3 at the maternal-fetal interface. In Sus scrofa (Pig), this protein is Cubilin (CUBN).